The following is a 1398-amino-acid chain: DNA-directed RNA polymerase subunit beta' (1398 aa).

Residues cysteine 71, cysteine 73, cysteine 86, and cysteine 89 each coordinate Zn(2+). Mg(2+) contacts are provided by aspartate 462, aspartate 464, and aspartate 466. 4 residues coordinate Zn(2+): cysteine 810, cysteine 884, cysteine 891, and cysteine 894.

This sequence belongs to the RNA polymerase beta' chain family. In terms of assembly, the RNAP catalytic core consists of 2 alpha, 1 beta, 1 beta' and 1 omega subunit. When a sigma factor is associated with the core the holoenzyme is formed, which can initiate transcription. Requires Mg(2+) as cofactor. Zn(2+) serves as cofactor.

The catalysed reaction is RNA(n) + a ribonucleoside 5'-triphosphate = RNA(n+1) + diphosphate. DNA-dependent RNA polymerase catalyzes the transcription of DNA into RNA using the four ribonucleoside triphosphates as substrates. The polypeptide is DNA-directed RNA polymerase subunit beta' (Mesorhizobium japonicum (strain LMG 29417 / CECT 9101 / MAFF 303099) (Mesorhizobium loti (strain MAFF 303099))).